The sequence spans 307 residues: Predicted GPI-anchored protein 44 (307 aa).

Residues 1-22 (MLSTNNLLILLIFSFLITNVKS) form the signal peptide. N-linked (GlcNAc...) asparagine glycosylation is found at asparagine 146 and asparagine 217. Positions 232 to 261 (TPQPLLETPSQESSAPNIDSTTPTTIDNTV) are disordered. The span at 239-254 (TPSQESSAPNIDSTTP) shows a compositional bias: polar residues. Residue glycine 286 is the site of GPI-anchor amidated glycine attachment. The propeptide at 287 to 307 (GAMGYPSISVALGLVFIAYLV) is removed in mature form.

The protein localises to the cell membrane. This chain is Predicted GPI-anchored protein 44 (PGA44), found in Candida albicans (strain SC5314 / ATCC MYA-2876) (Yeast).